Consider the following 602-residue polypeptide: MTKIDHIRNFAIIAHIDHGKSTIADRIIHSCGGLTEREMKAQVLDSMDIERERGITIKAQTVKLNYKAKDGKDYILNIIDTPGHVDFSYEVSRSLYACEGSILIVDSTQGVEAQTLANVYQALDTKHEIVPVLNKVDLPASDLEKTKKQIEEVIGIDTENAIPCSGKTGEGIEDILEQIIVSLPAPEGEKDADLKCLLVDSWYDTYLGVVILVRVINGKISKNMKIKMMSTDQEYIIEKVGVFTPKATDVNELNAGEIGFITTGIKILSETKVGDTICDATKPPQEALPGFKPSKPVVFCGLFPVDSSEYQKLKDGLGKLQLNDASFSYEAESSSALGLGFRCGFLGLLHLEIITERLEREFDINLLTTTPGVVYKVHMNKGDIIELQNPSSLPEPTLIKFIEEPWIKATIITPDQYLGAIIKVCQDKRGVQTNLSYSGNRAVLNYEIPLNEVVFDFNDRLKSMTSGYASFDYEIIGHREGDLVKLGILVNAEPVDALSMMVHKDFAQTVGREVCEKLKDLIPRHNFMIPVQAAIGGKIIARETIKGFKKDVLTKIHGGGARDRKRKLLDKQKKGKARGKQFGKVEIPQEAFIGVLKINKDQ.

The tr-type G domain maps to Asp5–Glu187. GTP is bound by residues Asp17–Thr22 and Asn134–Asp137.

It belongs to the TRAFAC class translation factor GTPase superfamily. Classic translation factor GTPase family. LepA subfamily.

Its subcellular location is the cell inner membrane. The enzyme catalyses GTP + H2O = GDP + phosphate + H(+). Its function is as follows. Required for accurate and efficient protein synthesis under certain stress conditions. May act as a fidelity factor of the translation reaction, by catalyzing a one-codon backward translocation of tRNAs on improperly translocated ribosomes. Back-translocation proceeds from a post-translocation (POST) complex to a pre-translocation (PRE) complex, thus giving elongation factor G a second chance to translocate the tRNAs correctly. Binds to ribosomes in a GTP-dependent manner. The protein is Elongation factor 4 of Pelagibacter ubique (strain HTCC1062).